Here is a 1992-residue protein sequence, read N- to C-terminus: Fer-1-like protein 4 (1992 aa).

3 consecutive C2 domains span residues 1 to 97 (MALT…VLRE), 214 to 330 (PRGD…QKWA), and 369 to 502 (TSSD…AGFN). Over 1-1952 (MALTVCVRHL…PLKTFIFFIW (1952 aa)) the chain is Extracellular. 3 disordered regions span residues 554 to 606 (RVEP…APEI), 661 to 686 (AGRQEEQSGQGSRADEGSESSTLEVQ), and 691 to 710 (SEDRGAGQEEQELLGTPAQW). Positions 559–569 (PSQTTQRSGLS) are enriched in polar residues. A compositionally biased stretch (basic residues) spans 572 to 581 (TGKKKKKKEK). C2 domains are found at residues 951–1078 (PSSG…ELQF) and 1126–1250 (ISGH…PQEE). 2 disordered regions span residues 1245-1276 (EDPQEEEETEEETRDLVPHGPQGEKSLPEAGT) and 1322-1361 (FQGQPSSDDEMDEAGDADGTHLISGDREAQEQGETDSKVS). 2 stretches are compositionally biased toward acidic residues: residues 1247–1257 (PQEEEETEEET) and 1328–1337 (SDDEMDEAGD). C2 domains lie at 1430–1549 (SFSE…ANCG) and 1675–1824 (VPAP…EHCS). Residues Asp-1464, Asp-1470, Asp-1519, Asp-1521, Asp-1527, Asp-1795, Ser-1798, and Asp-1801 each contribute to the Ca(2+) site. The disordered stretch occupies residues 1862 to 1885 (EAREAQAGKKRKRKRRAGRPEDLE). Positions 1869-1878 (GKKRKRKRRA) are enriched in basic residues. The chain crosses the membrane as a helical span at residues 1953–1973 (RRYWRILVLLLLALITIFLLL). At 1974–1992 (VFYTIPGQISEVIFSPVHK) the chain is on the cytoplasmic side.

Ca(2+) serves as cofactor.

It is found in the membrane. This is Fer-1-like protein 4 (Fer1l4) from Mus musculus (Mouse).